Here is a 302-residue protein sequence, read N- to C-terminus: Quinolinate synthase (302 aa).

The iminosuccinate site is built by His24 and Ser41. Cys86 serves as a coordination point for [4Fe-4S] cluster. Iminosuccinate-binding positions include 112–114 (YVN) and Ser129. Position 173 (Cys173) interacts with [4Fe-4S] cluster. Iminosuccinate contacts are provided by residues 199–201 (HPE) and Thr216. Cys259 lines the [4Fe-4S] cluster pocket.

The protein belongs to the quinolinate synthase family. Type 2 subfamily. Requires [4Fe-4S] cluster as cofactor.

It is found in the cytoplasm. The enzyme catalyses iminosuccinate + dihydroxyacetone phosphate = quinolinate + phosphate + 2 H2O + H(+). It participates in cofactor biosynthesis; NAD(+) biosynthesis; quinolinate from iminoaspartate: step 1/1. Functionally, catalyzes the condensation of iminoaspartate with dihydroxyacetone phosphate to form quinolinate. In Thermococcus onnurineus (strain NA1), this protein is Quinolinate synthase.